Reading from the N-terminus, the 415-residue chain is Serine hydroxymethyltransferase (415 aa).

Residues 1–10 (MERSHIRDVD) show a composition bias toward basic and acidic residues. The disordered stretch occupies residues 1 to 21 (MERSHIRDVDPDAADALSSER). (6S)-5,6,7,8-tetrahydrofolate contacts are provided by residues Leu-119 and 123-125 (GHL). Lys-228 carries the post-translational modification N6-(pyridoxal phosphate)lysine. 353–355 (SAF) is a binding site for (6S)-5,6,7,8-tetrahydrofolate.

It belongs to the SHMT family. Homodimer. Pyridoxal 5'-phosphate is required as a cofactor.

It is found in the cytoplasm. The enzyme catalyses (6R)-5,10-methylene-5,6,7,8-tetrahydrofolate + glycine + H2O = (6S)-5,6,7,8-tetrahydrofolate + L-serine. It participates in one-carbon metabolism; tetrahydrofolate interconversion. The protein operates within amino-acid biosynthesis; glycine biosynthesis; glycine from L-serine: step 1/1. Catalyzes the reversible interconversion of serine and glycine with tetrahydrofolate (THF) serving as the one-carbon carrier. Also exhibits THF-independent aldolase activity toward beta-hydroxyamino acids, producing glycine and aldehydes, via a retro-aldol mechanism. The polypeptide is Serine hydroxymethyltransferase (Haloquadratum walsbyi (strain DSM 16790 / HBSQ001)).